The following is a 503-amino-acid chain: Probable apyrase 4 (503 aa).

Low complexity predominate over residues 1–14 (MQRSNARSRSNINS). The disordered stretch occupies residues 1–39 (MQRSNARSRSNINSDMVDPPEVQTSPGNHRSSPSTAAKP). At 1 to 45 (MQRSNARSRSNINSDMVDPPEVQTSPGNHRSSPSTAAKPKSKRTK) the chain is on the cytoplasmic side. A helical; Signal-anchor for type II membrane protein membrane pass occupies residues 46–66 (SIIFVIVACVTIALGLLFIGY). Topologically, residues 67 to 503 (SILRSGRNRR…DLSNVAKYKI (437 aa)) are extracellular. 83–93 (VIIDGGSSGTR) contacts ATP. The active-site Proton acceptor is Glu206. Residue 230–240 (GIVELGGASAQ) coordinates ATP. N-linked (GlcNAc...) asparagine glycans are attached at residues Asn261, Asn293, and Asn338.

The protein belongs to the GDA1/CD39 NTPase family. Requires Ca(2+) as cofactor. In terms of tissue distribution, expressed both in the primary root and lateral root but not in the rosette leaves.

It is found in the membrane. It catalyses the reaction a ribonucleoside 5'-triphosphate + 2 H2O = a ribonucleoside 5'-phosphate + 2 phosphate + 2 H(+). In terms of biological role, catalyzes the hydrolysis of phosphoanhydride bonds of nucleoside tri- and di-phosphates. The sequence is that of Probable apyrase 4 (APY4) from Arabidopsis thaliana (Mouse-ear cress).